A 443-amino-acid polypeptide reads, in one-letter code: Multidrug resistance protein MdtA (443 aa).

The signal sequence occupies residues 1–24 (MKAQSKRTSRLLILLGIAVAIIVA). Polar residues predominate over residues 36–46 (DGSTGAQQHAV). Disordered stretches follow at residues 36–57 (DGST…GGRR) and 398–443 (TPRS…AEKS). Residues 409-419 (AAEKPATAEKA) show a composition bias toward basic and acidic residues. Residues 427–443 (SATGASAGSTTTAAEKS) show a composition bias toward low complexity.

It belongs to the membrane fusion protein (MFP) (TC 8.A.1) family. Part of a tripartite efflux system composed of MdtA, MdtB and MdtC.

The protein localises to the cell inner membrane. This Yersinia enterocolitica serotype O:8 / biotype 1B (strain NCTC 13174 / 8081) protein is Multidrug resistance protein MdtA.